Reading from the N-terminus, the 237-residue chain is Sulfhydrogenase 2 subunit delta (237 aa).

Positions 11, 14, 83, 132, 160, 163, 170, and 179 each coordinate [4Fe-4S] cluster. Residues cysteine 188, cysteine 192, cysteine 199, and cysteine 202 each contribute to the [3Fe-4S] cluster site.

It belongs to the [NiFe]/[NiFeSe] hydrogenase small subunit family. In terms of assembly, dimer of heterotetramer of alpha, beta, gamma and delta subunits. The nickel-containing alpha and delta subunits constitute the hydrogenase activity. The beta and gamma subunits (flavin-containing dimer) constitute the sulfur reductase activity. It depends on Ni(2+) as a cofactor. Requires [4Fe-4S] cluster as cofactor. The cofactor is [3Fe-4S] cluster.

The protein resides in the cytoplasm. The catalysed reaction is H2 + NADP(+) = NADPH + H(+). It catalyses the reaction H2 + NAD(+) = NADH + H(+). Its function is as follows. Part of a bifunctional enzyme complex that functions as a hydrogen-evolving hydrogenase with sulfur-reducing activity. May play a role in hydrogen cycling during fermentative growth. Activity exhibited with NAD in addition to NADPH. The alpha and delta subunits form the hydrogenase component that catalyzes the reduction of protons to evolve hydrogen. The polypeptide is Sulfhydrogenase 2 subunit delta (Pyrococcus furiosus (strain ATCC 43587 / DSM 3638 / JCM 8422 / Vc1)).